A 261-amino-acid chain; its full sequence is Carnitinyl-CoA dehydratase (261 aa).

Residue glutamate 111 is the Nucleophile of the active site. Glutamate 131 serves as the catalytic Proton acceptor.

Belongs to the enoyl-CoA hydratase/isomerase family.

It carries out the reaction (R)-carnitinyl-CoA = crotonobetainyl-CoA + H2O. The protein operates within amine and polyamine metabolism; carnitine metabolism. Catalyzes the reversible dehydration of L-carnitinyl-CoA to crotonobetainyl-CoA. This chain is Carnitinyl-CoA dehydratase, found in Escherichia coli O157:H7.